The following is a 146-amino-acid chain: Protein US8.5 (146 aa).

The interval 63–93 (LIAIADARGDPPETLPPGAGGAAPACRRPPR) is disordered. Positions 84–93 (AAPACRRPPR) are enriched in low complexity.

Belongs to the HHV-1 US8.5 protein family. Phosphorylated.

It is found in the host nucleus. The protein resides in the host nucleolus. The chain is Protein US8.5 from Human herpesvirus 2 (strain HG52) (HHV-2).